The chain runs to 420 residues: CinA-like protein (420 aa).

It belongs to the CinA family.

This is CinA-like protein from Syntrophus aciditrophicus (strain SB).